A 449-amino-acid chain; its full sequence is UNC93-like protein MFSD11 (449 aa).

The chain crosses the membrane as a helical span at residues 8-28 (LFNIVILGVAFMFMFTAFQTC). Asn40 carries an N-linked (GlcNAc...) asparagine glycan. Helical transmembrane passes span 53-73 (AIIY…VAIV), 74-94 (GPQI…AVFI), 96-116 (PFPW…AVLW), 138-158 (IFWA…YFAW), and 170-190 (RTVF…FFLI). Ser204 carries the post-translational modification Phosphoserine. 6 helical membrane-spanning segments follow: residues 239-259 (MLLL…FSGV), 277-297 (LIGL…SLFG), 309-329 (PVVL…FLNM), 359-379 (FLLG…LGFL), 385-405 (APAF…AFFY), and 410-430 (LLHW…ISFF).

It belongs to the unc-93 family. As to expression, widely expressed.

The protein localises to the membrane. This is UNC93-like protein MFSD11 (Mfsd11) from Mus musculus (Mouse).